Reading from the N-terminus, the 384-residue chain is N-acetylneuraminate epimerase (384 aa).

Positions 1 to 24 are cleaved as a signal peptide; the sequence is MNMKTLLTYATLLSVTAFSHVVYA. Kelch repeat units lie at residues 46–90, 92–145, 147–184, 185–230, 233–281, 303–352, and 354–383; these read KVYV…SVIG, YIYL…YSPD, RQILFFGGYNKAYFDRYLRDISTTDKQVNPEVWQRIVD, DYMG…VIEG, VTLI…VAGA, QAFE…TTSE, and VLIVGGEKSGKEMSHKVYMLAWNGSTVEVI. The Proton acceptor role is filled by E239.

Belongs to the NanM family. Homodimer.

The protein localises to the periplasm. The enzyme catalyses N-acetyl-alpha-neuraminate = N-acetyl-beta-neuraminate. Functionally, converts alpha-N-acetylneuranimic acid (Neu5Ac) to the beta-anomer, accelerating the equilibrium between the alpha- and beta-anomers. Probably facilitates sialidase-negative bacteria to compete successfully for limited amounts of extracellular Neu5Ac, which is likely taken up in the beta-anomer. In addition, the rapid removal of sialic acid from solution might be advantageous to the bacterium to damp down host responses. The sequence is that of N-acetylneuraminate epimerase from Vibrio cholerae serotype O1 (strain ATCC 39315 / El Tor Inaba N16961).